Reading from the N-terminus, the 2837-residue chain is Bifunctional DNA-directed RNA polymerase subunit beta-beta' (2837 aa).

Residues 1-1433 are DNA-directed RNA polymerase subunit beta; the sequence is MVDSSYMYAS…CLNVDLKQND (1433 aa). The segment at 1436–2837 is DNA-directed RNA polymerase subunit beta'; the sequence is IEDISHTNIA…ESVVAYDQSN (1402 aa). 4 residues coordinate Zn(2+): Cys1501, Cys1503, Cys1516, and Cys1519. The Mg(2+) site is built by Asp1893, Asp1895, and Asp1897. 4 residues coordinate Zn(2+): Cys2235, Cys2309, Cys2316, and Cys2319.

In the N-terminal section; belongs to the RNA polymerase beta chain family. This sequence in the C-terminal section; belongs to the RNA polymerase beta' chain family. In terms of assembly, the RNAP catalytic core consists of 2 alpha, 1 beta/beta' and 1 omega subunit. When a sigma factor is associated with the core the holoenzyme is formed, which can initiate transcription. Requires Mg(2+) as cofactor. Zn(2+) is required as a cofactor.

It catalyses the reaction RNA(n) + a ribonucleoside 5'-triphosphate = RNA(n+1) + diphosphate. Functionally, DNA-dependent RNA polymerase catalyzes the transcription of DNA into RNA using the four ribonucleoside triphosphates as substrates. The sequence is that of Bifunctional DNA-directed RNA polymerase subunit beta-beta' (rpoBC) from Wolbachia pipientis wMel.